A 209-amino-acid chain; its full sequence is tRNA(Phe) 7-((3-amino-3-carboxypropyl)-4-demethylwyosine(37)-N(4))-methyltransferase (209 aa).

It belongs to the TYW3 family.

It carries out the reaction 4-demethyl-7-[(3S)-3-amino-3-carboxypropyl]wyosine(37) in tRNA(Phe) + S-adenosyl-L-methionine = 7-[(3S)-3-amino-3-carboxypropyl]wyosine(37) in tRNA(Phe) + S-adenosyl-L-homocysteine + H(+). Functionally, S-adenosyl-L-methionine-dependent methyltransferase that acts as a component of the wyosine derivatives biosynthesis pathway. Probably methylates N-4 position of wybutosine-86 to produce wybutosine-72. In Saccharolobus solfataricus (strain ATCC 35092 / DSM 1617 / JCM 11322 / P2) (Sulfolobus solfataricus), this protein is tRNA(Phe) 7-((3-amino-3-carboxypropyl)-4-demethylwyosine(37)-N(4))-methyltransferase.